Here is a 75-residue protein sequence, read N- to C-terminus: Putative membrane protein insertion efficiency factor (75 aa).

The protein belongs to the UPF0161 family.

It localises to the cell inner membrane. Its function is as follows. Could be involved in insertion of integral membrane proteins into the membrane. The sequence is that of Putative membrane protein insertion efficiency factor from Gloeothece citriformis (strain PCC 7424) (Cyanothece sp. (strain PCC 7424)).